Here is a 238-residue protein sequence, read N- to C-terminus: Thymidine kinase a (238 aa).

ATP is bound by residues 38–45 (GPMFSGKS), 70–72 (DTR), and 115–118 (DEAQ). The Proton acceptor role is filled by glutamate 116. Position 147 (tyrosine 147) interacts with substrate. Zn(2+)-binding residues include cysteine 172 and cysteine 175. Residues 191-195 (TELIG) and tyrosine 200 each bind substrate. Cysteine 204 is a binding site for Zn(2+).

Belongs to the thymidine kinase family. In terms of assembly, monomer and dimer. Dimerization is stimulated by ATP. In terms of tissue distribution, expressed ubiquitously.

Its subcellular location is the cytoplasm. It catalyses the reaction thymidine + ATP = dTMP + ADP + H(+). Its pathway is purine metabolism. It functions in the pathway pyrimidine metabolism. Part of the salvage pathway for purine and pyrimidine deoxyribonucleotide synthesis. Phosphorylates preferentially purines over pyrimidines. Mediates tolerance to genotoxins, such as ultraviolet-C (UV-C) irradiation, MMC, a DNA crosslinker, and ZEO, a DNA intercalator, that induce double-strand breaks and thus contributes to several DNA repair pathways by providing deoxythymidine triphosphate that serve as precursors for DNA repair and to balance deoxyribonucleotides pools. The protein is Thymidine kinase a of Arabidopsis thaliana (Mouse-ear cress).